The primary structure comprises 845 residues: MPLSYQHFLKLLLLDDGTEAGPLEEELPRLADADLNRRVAEDLNLGNLNVSIPWTHKVGNFTGLYSHTVPIFNPEWQTPSFPKIHLQEDIIDRCQQFVGPLTVNEKRRLKLIMPARFYPNSTKYLPLDKGIKPYYPEHVVNHYFQARHYLHTLWKAGILYKRETTRSASFCGSPYSWEQELHHGRLVTKTSQRHGDKSVCSQPSGILSRSSVGPCIRSQFKQSRLGLQPHQGPLATSQSGRSGSIWARVHPSTRRCSGVEPSGSRHIDYSASSTSSCLRQSAVRKAAYSHLSTSKRQSSSGHKVEFPSFPPSSARSQSQGPVFSCWWLQFRNSKPCSEYCLSHLVNLLEDWGPCTDHGEHHIRIPRTPARVTGGVFLVDKNPHNTAESRLVVDFSQFSRGITRVSWPKFAVPNLQSLTNLLSSNLSWLSLDVSAAFYHIPLHPAAMPHLLIGSSGLSRYVARLSSNSRIHNHQYGTLQNLHDSCSRQLYVSLMLLYKTYGRKLHLYSHPIILGFRKIPMGVGLSPFLLAQFTSAICSVVRRAFPHCLAFSYMDDVVLGAKTVQHLESLYTAVTNFLLSLGIHLNPTKTKRWGYSLNFMGYIIGCWGALPQDHIVQKIKDCFRKLPVNRPIDWKVCQRIVGLLGFAAPFTQCGYPALMPLYACIQAKQAFTFSPTYKAFLSKQYMNLYPVARQRPGLCQVFADATPTGWGLAMGHQRMRGTFVAPLPIHTAELLAACFARSRSGAKLIGTDNSVVLSRKYTSFPWLLGCTANWILRGTSFVYVPSALNPADDPSRGRLGLYRPLLRLPFRPTTGRTSLYAVSPSVPSHLPDRVHFASPLHVAWRPP.

Residues 1 to 179 (MPLSYQHFLK…FCGSPYSWEQ (179 aa)) form a terminal protein domain (TP) region. Positions 180–348 (ELHHGRLVTK…YCLSHLVNLL (169 aa)) are spacer. 2 disordered regions span residues 188–211 (TKTS…SRSS) and 288–317 (YSHL…ARSQ). 2 stretches are compositionally biased toward polar residues: residues 199–211 (VCSQ…SRSS) and 290–301 (HLSTSKRQSSSG). The interval 349 to 692 (EDWGPCTDHG…YMNLYPVARQ (344 aa)) is polymerase/reverse transcriptase domain (RT). Residues 359–602 (EHHIRIPRTP…YSLNFMGYII (244 aa)) enclose the Reverse transcriptase domain. D431, D553, and D554 together coordinate Mg(2+).

Belongs to the hepadnaviridae P protein family.

It carries out the reaction DNA(n) + a 2'-deoxyribonucleoside 5'-triphosphate = DNA(n+1) + diphosphate. The enzyme catalyses Endonucleolytic cleavage to 5'-phosphomonoester.. Activated by host HSP70 and HSP40 in vitro to be able to bind the epsilon loop of the pgRNA. Because deletion of the RNase H region renders the protein partly chaperone-independent, the chaperones may be needed indirectly to relieve occlusion of the RNA-binding site by this domain. Inhibited by several reverse-transcriptase inhibitors: Lamivudine, Adefovir and Entecavir. Multifunctional enzyme that converts the viral RNA genome into dsDNA in viral cytoplasmic capsids. This enzyme displays a DNA polymerase activity that can copy either DNA or RNA templates, and a ribonuclease H (RNase H) activity that cleaves the RNA strand of RNA-DNA heteroduplexes in a partially processive 3'- to 5'-endonucleasic mode. Neo-synthesized pregenomic RNA (pgRNA) are encapsidated together with the P protein, and reverse-transcribed inside the nucleocapsid. Initiation of reverse-transcription occurs first by binding the epsilon loop on the pgRNA genome, and is initiated by protein priming, thereby the 5'-end of (-)DNA is covalently linked to P protein. Partial (+)DNA is synthesized from the (-)DNA template and generates the relaxed circular DNA (RC-DNA) genome. After budding and infection, the RC-DNA migrates in the nucleus, and is converted into a plasmid-like covalently closed circular DNA (cccDNA). The activity of P protein does not seem to be necessary for cccDNA generation, and is presumably released from (+)DNA by host nuclear DNA repair machinery. This Homo sapiens (Human) protein is Protein P.